The chain runs to 387 residues: Zinc transporter 7 (387 aa).

Topologically, residues 1 to 37 (MLPLSIKDDEYKPAKFNLVVKLSGWFRSILADKTSRN) are cytoplasmic. A helical membrane pass occupies residues 38–58 (LFFFLCLNLSFAFVELLYGIW). Over 59 to 67 (SNSLGLISD) the chain is Lumenal. Residues 68–88 (SFHMFFDCTALLAGLAASVIS) traverse the membrane as a helical segment. Topologically, residues 89–102 (RWRSNDSFSYGYVR) are cytoplasmic. Residues 103-123 (AEVLAGFVNGLFLIFTAFFIF) traverse the membrane as a helical segment. The Lumenal portion of the chain corresponds to 124-140 (SEGVERALEPPDVHHDR). Residues 141–161 (LLPVSIAGLLVNLVGIFVFQH) form a helical membrane-spanning segment. The interval 161 to 232 (HGGHGHSHGG…HDDQHCHDDH (72 aa)) is his-rich loop. Residues 162 to 247 (GGHGHSHGGD…KGSSKQILQG (86 aa)) are Cytoplasmic-facing. Residues 167-237 (SHGGDDHGHS…CHDDHTLTPG (71 aa)) form a disordered region. Basic residues predominate over residues 187-201 (GHSHGGHGHSHGGHG). Basic and acidic residues-rich tracts occupy residues 202–214 (HSHESKHGHDHGH) and 221–233 (HSHDDQHCHDDHT). A helical membrane pass occupies residues 248–268 (VFLHIVADTLGSVGVIISAIL). Topologically, residues 269-273 (MQKYD) are lumenal. Residues 274 to 294 (LMIADPICSMLIALLIGVSVV) form a helical membrane-spanning segment. Residues 295-387 (PLLRESIGIL…LYVQIEVAAM (93 aa)) are Cytoplasmic-facing.

It belongs to the cation diffusion facilitator (CDF) transporter (TC 2.A.4) family. SLC30A subfamily. In terms of assembly, homooligomer.

It localises to the golgi apparatus membrane. The protein resides in the cytoplasmic vesicle. Its subcellular location is the golgi apparatus. It is found in the trans-Golgi network. The protein localises to the sarcoplasmic reticulum. It localises to the mitochondrion. The catalysed reaction is Zn(2+)(in) = Zn(2+)(out). Zinc ion transporter mediating zinc entry from the cytosol into the lumen of organelles along the secretory pathway. By contributing to zinc ion homeostasis within the early secretory pathway, regulates the activation and folding of enzymes like alkaline phosphatases. The chain is Zinc transporter 7 (slc30a7) from Danio rerio (Zebrafish).